Consider the following 208-residue polypeptide: Imidazoleglycerol-phosphate dehydratase (208 aa).

The disordered stretch occupies residues 1-22 (MTEDTETSSTGAGADDRTAAIS).

It belongs to the imidazoleglycerol-phosphate dehydratase family.

Its subcellular location is the cytoplasm. It catalyses the reaction D-erythro-1-(imidazol-4-yl)glycerol 3-phosphate = 3-(imidazol-4-yl)-2-oxopropyl phosphate + H2O. Its pathway is amino-acid biosynthesis; L-histidine biosynthesis; L-histidine from 5-phospho-alpha-D-ribose 1-diphosphate: step 6/9. The chain is Imidazoleglycerol-phosphate dehydratase from Haloquadratum walsbyi (strain DSM 16790 / HBSQ001).